We begin with the raw amino-acid sequence, 430 residues long: Serine hydroxymethyltransferase (430 aa).

120–122 is a binding site for (6S)-5,6,7,8-tetrahydrofolate; the sequence is GHI. Lysine 226 bears the N6-(pyridoxal phosphate)lysine mark.

It belongs to the SHMT family. As to quaternary structure, homodimer. Pyridoxal 5'-phosphate serves as cofactor.

It is found in the cytoplasm. It functions in the pathway amino-acid biosynthesis; glycine biosynthesis; glycine from L-serine: step 1/1. Its function is as follows. Catalyzes the reversible interconversion of serine and glycine with a modified folate serving as the one-carbon carrier. Also exhibits a pteridine-independent aldolase activity toward beta-hydroxyamino acids, producing glycine and aldehydes, via a retro-aldol mechanism. The protein is Serine hydroxymethyltransferase of Pyrobaculum neutrophilum (strain DSM 2338 / JCM 9278 / NBRC 100436 / V24Sta) (Thermoproteus neutrophilus).